A 238-amino-acid polypeptide reads, in one-letter code: SH2 domain-containing adapter protein F (238 aa).

2 disordered regions span residues 1–70 (MEPY…PWEW) and 85–121 (GSENCLSPGREEKGRLPPRLSAGNPKSAKPLGMEPSS). Serine 39 is subject to Phosphoserine. Residues 55–66 (EDDERPPEEYDQ) are compositionally biased toward acidic residues. A Phosphotyrosine modification is found at tyrosine 64. Positions 138–233 (WYHGAISRTD…AEHMSLLYPV (96 aa)) constitute an SH2 domain.

Interacts with phosphorylated 'Tyr-720' of PDGFRA via its SH2 domain. In terms of processing, may become phosphorylated upon binding to PDGFRA.

Its function is as follows. Adapter protein which may play a role in the regulation of apoptosis in response to PDGF. The chain is SH2 domain-containing adapter protein F from Mus musculus (Mouse).